The following is a 216-amino-acid chain: Octanoyltransferase (216 aa).

One can recognise a BPL/LPL catalytic domain in the interval 32-207; sequence ENSPDELWLV…TFSQLLGYEH (176 aa). Residues 71 to 78, 138 to 140, and 151 to 153 each bind substrate; these read RGGQVTYH, SLG, and GLA. Cysteine 169 functions as the Acyl-thioester intermediate in the catalytic mechanism.

The protein belongs to the LipB family.

It is found in the cytoplasm. The catalysed reaction is octanoyl-[ACP] + L-lysyl-[protein] = N(6)-octanoyl-L-lysyl-[protein] + holo-[ACP] + H(+). Its pathway is protein modification; protein lipoylation via endogenous pathway; protein N(6)-(lipoyl)lysine from octanoyl-[acyl-carrier-protein]: step 1/2. Its function is as follows. Catalyzes the transfer of endogenously produced octanoic acid from octanoyl-acyl-carrier-protein onto the lipoyl domains of lipoate-dependent enzymes. Lipoyl-ACP can also act as a substrate although octanoyl-ACP is likely to be the physiological substrate. The sequence is that of Octanoyltransferase from Shewanella amazonensis (strain ATCC BAA-1098 / SB2B).